The primary structure comprises 514 residues: 2-isopropylmalate synthase (514 aa).

The Pyruvate carboxyltransferase domain maps to leucine 5 to valine 267. Positions 14, 202, 204, and 238 each coordinate Mn(2+). A regulatory domain region spans residues lysine 393 to valine 514.

The protein belongs to the alpha-IPM synthase/homocitrate synthase family. LeuA type 1 subfamily. Homodimer. It depends on Mn(2+) as a cofactor.

The protein localises to the cytoplasm. It carries out the reaction 3-methyl-2-oxobutanoate + acetyl-CoA + H2O = (2S)-2-isopropylmalate + CoA + H(+). The protein operates within amino-acid biosynthesis; L-leucine biosynthesis; L-leucine from 3-methyl-2-oxobutanoate: step 1/4. Its function is as follows. Catalyzes the condensation of the acetyl group of acetyl-CoA with 3-methyl-2-oxobutanoate (2-ketoisovalerate) to form 3-carboxy-3-hydroxy-4-methylpentanoate (2-isopropylmalate). This is 2-isopropylmalate synthase from Methylococcus capsulatus (strain ATCC 33009 / NCIMB 11132 / Bath).